The primary structure comprises 166 residues: Lactose-binding lectin l-2 (166 aa).

The signal sequence occupies residues 1–24; the sequence is MVSFKLPAFLCVAVLSSMALVSHG. 3 disulfides stabilise this stretch: C34/C45, C62/C160, and C136/C152. The 121-residue stretch at 41-161 folds into the C-type lectin domain; the sequence is HKNRCYLHVA…CDLLFPSICV (121 aa).

As to quaternary structure, homodimer; disulfide-linked. Skin; contained within club cells which are a component of the epidermis in combination with epithelial cells and mucus cells (at protein level).

It localises to the secreted. In terms of biological role, involved in host defense at the body surface. Causes agglutination and suppresses the growth of the Gram-negative bacterium E.coli K12. Possesses calcium-independent hemagglutinating activity. This is Lactose-binding lectin l-2 from Anguilla japonica (Japanese eel).